Reading from the N-terminus, the 522-residue chain is Protein nucleotidyltransferase YdiU (522 aa).

ATP contacts are provided by Gly109, Gly111, Arg112, Lys132, Asp144, Gly145, Arg195, and Arg202. Asp271 functions as the Proton acceptor in the catalytic mechanism. 2 residues coordinate Mg(2+): Asn272 and Asp281. Asp281 serves as a coordination point for ATP.

The protein belongs to the SELO family. Mg(2+) serves as cofactor. Requires Mn(2+) as cofactor.

The enzyme catalyses L-seryl-[protein] + ATP = 3-O-(5'-adenylyl)-L-seryl-[protein] + diphosphate. The catalysed reaction is L-threonyl-[protein] + ATP = 3-O-(5'-adenylyl)-L-threonyl-[protein] + diphosphate. It carries out the reaction L-tyrosyl-[protein] + ATP = O-(5'-adenylyl)-L-tyrosyl-[protein] + diphosphate. It catalyses the reaction L-histidyl-[protein] + UTP = N(tele)-(5'-uridylyl)-L-histidyl-[protein] + diphosphate. The enzyme catalyses L-seryl-[protein] + UTP = O-(5'-uridylyl)-L-seryl-[protein] + diphosphate. The catalysed reaction is L-tyrosyl-[protein] + UTP = O-(5'-uridylyl)-L-tyrosyl-[protein] + diphosphate. Functionally, nucleotidyltransferase involved in the post-translational modification of proteins. It can catalyze the addition of adenosine monophosphate (AMP) or uridine monophosphate (UMP) to a protein, resulting in modifications known as AMPylation and UMPylation. The protein is Protein nucleotidyltransferase YdiU of Burkholderia multivorans (strain ATCC 17616 / 249).